A 384-amino-acid chain; its full sequence is Protein NDRG1 (384 aa).

The residue at position 2 (serine 2) is an N-acetylserine. 3 positions are modified to phosphoserine: serine 2, serine 319, and serine 326. Residues arginine 325–cysteine 384 form a disordered region. Residues arginine 327–serine 336 show a composition bias toward polar residues. Residue threonine 328 is modified to Phosphothreonine; by SGK1. Residues serine 330 and serine 332 each carry the phosphoserine; by SGK1 modification. Serine 333 is modified (phosphoserine). A Phosphothreonine modification is found at threonine 335. Serine 336 and serine 342 each carry phosphoserine. Repeat copies occupy residues glycine 339–glutamate 348 and glycine 349–glutamate 358. The 2 X 10 AA tandem repeats of G-[PST]-R-S-R-S-H-T-S-E stretch occupies residues glycine 339–glutamate 358. Basic and acidic residues predominate over residues histidine 345–arginine 361. Residue threonine 346 is modified to Phosphothreonine; by SGK1. Position 352 is a phosphoserine (serine 352). Threonine 356 is modified (phosphothreonine; by SGK1). Residues serine 374–cysteine 384 are compositionally biased toward low complexity.

The protein belongs to the NDRG family. In terms of assembly, interacts with RAB4A (membrane-bound form); the interaction involves NDRG1 in vesicular recycling of CDH1. Interacts with APOA1, APOA2, PRA1 and RTN1. In terms of processing, under stress conditions, phosphorylated in the C-terminal on many serine and threonine residues. Phosphorylated in vitro by PKA. Phosphorylation enhanced by increased intracellular cAMP levels. Homocysteine induces dephosphorylation. Phosphorylation by SGK1 is cell cycle dependent.

The protein localises to the cytoplasm. It is found in the cytosol. The protein resides in the cytoskeleton. Its subcellular location is the microtubule organizing center. It localises to the centrosome. The protein localises to the nucleus. It is found in the cell membrane. Its function is as follows. Stress-responsive protein involved in hormone responses, cell growth, and differentiation. Acts as a tumor suppressor in many cell types. Necessary but not sufficient for p53/TP53-mediated caspase activation and apoptosis. Has a role in cell trafficking notably of the Schwann cell and is necessary for the maintenance and development of the peripheral nerve myelin sheath. Required for vesicular recycling of CDH1 and TF. May also function in lipid trafficking. Protects cells from spindle disruption damage. Functions in p53/TP53-dependent mitotic spindle checkpoint. Regulates microtubule dynamics and maintains euploidy. The sequence is that of Protein NDRG1 (NDRG1) from Bos taurus (Bovine).